Reading from the N-terminus, the 377-residue chain is Palmitoyltransferase ZDHHC16 (377 aa).

Over 1 to 77 (MRGQRSLLLG…VYWLVDNVIR (77 aa)) the chain is Cytoplasmic. The chain crosses the membrane as a helical span at residues 78–98 (WFGVVFVVLVIVLTGSIVAIA). Residues 99 to 116 (YLCVLPLILRTYSVPRLC) lie on the Lumenal side of the membrane. The chain crosses the membrane as a helical span at residues 117 to 137 (WHFFYSHWNLILIVFHYYQAI). The Cytoplasmic portion of the chain corresponds to 138–198 (TTPPGYPPQG…NNCVGHYNHR (61 aa)). One can recognise a DHHC domain in the interval 155–205 (SICKKCIYPKPARTHHCSICNRCVLKMDHHCPWLNNCVGHYNHRYFFSFCF). Cysteine 185 acts as the S-palmitoyl cysteine intermediate in catalysis. Residues 199 to 219 (YFFSFCFFMTLGCVYCSYGSW) traverse the membrane as a helical segment. The Lumenal segment spans residues 220-266 (DLFREAYAAIEKMKQLDKNKLQAVANQTYHQTPPPIFSFRERMTHKS). A helical membrane pass occupies residues 267–287 (LVYLWFLCSSVALALGALTVW). At 288–377 (HAVLISRGET…TAHSASVMAV (90 aa)) the chain is on the cytoplasmic side.

Belongs to the DHHC palmitoyltransferase family. Interacts with ABL1. Interacts with COPS5/JAB1.

Its subcellular location is the endoplasmic reticulum membrane. It carries out the reaction L-cysteinyl-[protein] + hexadecanoyl-CoA = S-hexadecanoyl-L-cysteinyl-[protein] + CoA. In terms of biological role, palmitoyl acyltransferase that mediates palmitoylation of proteins such as PLN and ZDHHC6. Required during embryonic heart development and cardiac function, possibly by mediating palmitoylation of PLN, thereby affecting PLN phosphorylation and homooligomerization. Also required for eye development. Palmitoylates ZDHHC6, affecting the quaternary assembly of ZDHHC6, its localization, stability and function. May play a role in DNA damage response. May be involved in apoptosis regulation. Involved in the proliferation of neural stem cells by regulating the FGF/ERK pathway. This is Palmitoyltransferase ZDHHC16 from Macaca fascicularis (Crab-eating macaque).